The chain runs to 3414 residues: MVKKAILKGKGGGPPRRVSKETATKTRQPRVQMPNGLVLMRMMGILWHAVAGTARNPVLKAFWNSVPLKQATAALRKIKRTVSALMVGLQKRGKRRSATDWMSWLLVITLLGMTIAATVRKERDGSTVIRAEGKDAATQVRVENGTCVILATDMGSWCDDSLSYECVTIDQGEEPVDVDCFCRNVDGVYLEYGRCGKQEGSRTRRSVLIPSHAQGELTGRGHKWLEGDSLRTHLTRVEGWVWKNRLLALAMVTVVWLTLESVVTRVAVLVVLLCLAPVYASRCTHLENRDFVTGTQGTTRVTLVLELGGCVTITAEGKPSMDVWLDAIYQENPAQTREYCLHAKLSDTKVAARCPTMGPATLAEEHQGGTVCKRDQSDRGWGNHCGLFGKGSIVACVKAACEAKKKATGHVYDANKIVYTVKVEPHTGDYVAANETHSGRKTASFTVSSEKTILTMGEYGDVSLLCRVASGVDLAQTVILELDKTVEHLPTAWQVHRDWFNDLALPWKHEGARNWNNAERLVEFGAPHAVKMDVYNLGDQTGVLLKALAGVPVAHIEGTKYHLKSGHVTCEVGLEKLKMKGLTYTMCDKTKFTWKRAPTDSGHDTVVMEVTFSGTKPCRIPVRAVAHGSPDVNVAMLITPNPTIENNGGGFIEMQLPPGDNIIYVGELSYQWFQKGSSIGRVFQKTKKGIERLTVIGEHAWDFGSAGGFLSSIGKALHTVLGGAFNSIFGGVGFLPKLLLGVALAWLGLNMRNPTMSMSFLLAGVLVLAMTLGVGADVGCAVDTERMELRCGEGLVVWREVSEWYDNYAYYPETPGALASAIKETFEEGSCGVVPQNRLEMAMWRSSVTELNLALAEGEANLTVMVDKFDPTDYRGGVPGLLKKGKDIKVSWKSWGHSMIWSIPEAPRRFMVGTEGQSECPLERRKTGVFTVAEFGVGLRTKVFLDFRQEPTHECDTGVMGAAVKNGMAIHTDQSLWMRSMKNDTGTYIVELLVTDLRNCSWPASHTIDNADVVDSELFLPASLAGPRSWYNRIPGYSEQVKGPWKHTPIRVIREECPGTTVTINAKCDKRGASVRSTTESGKVIPEWCCRACTMPPVTFRTGTDCWYAMEIRPVHDQGGLVRSMVVADNGELLSEGGVPGIVALFVVLEYIIRRRPSTGSTVVWGGIVVLALLVTGMVRMESLVRYVVAVGITFHLELGPEIVALMLLQAVFELRVGLLSAFALRRSLTVREMVTTYFLLLVLELGLPSANLEDFWKWGDALAMGALIFRACTAEGKTGAGLLLMALMTQQDVVTVHHGLVCFLSAASACSIWRLLRGHREQKGLTWIVPLARLLGGEGSGIRLLAFWELSAHRGRRSFSEPLTVVGVMLTLASGMMRHTSQEALCALAVASFLLLMLVLGTRKMQLVAEWSGCVEWHPELVNEGGEVSLRVRQDAMGNFHLTELEKEERMMAFWLIAGLAASAIHWSGIIGVMGLWTLTKMLRSSRRSDLVFSGQGGRERGDRPFEVKDGVYRIFSPGLFWGQNQVGVGYGSKGVLHTMWHVTRGAALSIDDAVAGPYWADVREDVVCYGGAWSLEEKWKGETVQVHAFPPGKAHEVHQCQPGELILDTGRKLGAIPIDLVKGTSGSPILNAQGVVVGLYGNGLKTNETYVSSIAQGEAEKSRPNLPQAVVGTGWTSKGQITVLDMHPGSGKTHRVLPELIRQCIDRRLRTLVLAPTRVVLKEMERALNGKRVRFHSPAVSDQQAGGAIVDVMCHATYVNRRLLPQGRQNWEVAIMDEAHWTDPHSIAARGHLYTLAKENKCALVLMTATPPGKSEPFPESNGAITSEERQIPNGEWRDGFDWITEYEGRTAWFVPSIAKGGAIARTLRQKGKSVICLNSKTFEKDYSRVRDEKPDFVVTTDISEMGANLDVSRVIDGRTNIKPEEVDGKVELTGTRRVTTASAAQRRGRVGRQDGRTDEYIYSGQCDDDDSGLVQWKEAQILLDNITTLRGPVATFYGPEQDKMPEVAGHFRLTEEKRKHFRHLLTHCDFTPWLAWHVAANVSSVTDRSWTWEGPEANAVDEASGGLVTFRSPNGAERTLRPVWKDARMFKEGRDIKEFVAYASGRRSFGDVLTGMSGVPELLRHRCVSALDVFYTLMHEKPDSRAMRMAERDAPEAFLTMVEMMVLGLATLGVIWCFVVRTSISRMMLGTLVLLASLLLLWAGGVGYGNMAGVALIFYTLLTVLQPEAGKQRSSDDNKLAYFLLTLCSLAGLVAANEMGFLEKTKADLSTVLWSEREEPRPWSEWTNVDIQPARSWGTYVLVVSLFTPYIIHQLQTKIQQLVNSAVASGAQAMRDLGGGAPFFGVAGHVMTLGVVSLIGATPTSLMVGVGLAALHLAIVVSGLEAELTQRAHKVFFSAMVRNPMVDGDVINPFGEGEAKPALYERRMSLVLAIVLCLMSVVMNRTVASITEASAVGLAAAGQLLRPEADTLWTMPVACGMSGVVRGSLWGFLPLGHRLWLRASGGRRGGSEGDTLGDLWKRRLNNCTREEFFVYRRTGILETERDKARELLRRGETNMGLAVSRGTAKLAWLEERGYATLKGEVVDLGCGRGGWSYYAASRPAVMSVRAYTIGGRGHEAPKMVTSLGWNLIKFRSGMDVFSMQPHRADTVMCDIGESSPDAAVEGERTRKVILLMEQWKNRNPTAACVFKVLAPYRPEVIEALHRFQLQWGGGLVRTPFSRNSTHEMYYSTAVTGNIVNSVNVQSRKLLARFGDQRGPTRVPELDLGVGTRCVVLAEDKVKEQDVQERIKALREQYSETWHMDEEHPYRTWQYWGSYRTAPTGSAASLINGVVKLLSWPWNAREDVVRMAMTDTTAFGQQRVFKDKVDTKAQEPQPGTRVIMRAVNDWILERLAQKSKPRMCSREEFIAKVKSNAALGAWSDEQNRWASAREAVEDPAFWHLVDEERERHLMGRCAHCVYNMMGKREKKLGEFGVAKGSRAIWYMWLGSRFLEFEALGFLNEDHWASRESSGAGVEGISLNYLGWHLKKLSTLNGGLFYADDTAGWDTKVTNADLEDEEQILRYMEGEHKQLATTIMQKAYHAKVVKVARPSRDGGCIMDVITRRDQRGSGQVVTYALNTLTNIKVQLIRMMEGEGVIEAADAHNPRLLRVERWLKEHGEERLGRMLVSGDDCVVRPLDDRFGKALYFLNDMAKTRKDIGEWEHSAGLSSWEEVPFCSHHFHELVMKDGRTLVVPCRDQDELVGRARISPGCGWSVRETACLSKAYGQMWLLSYFHRRDLRTLGLAINSAVPVDWVPTGRTTWSIHASGAWMTTEDMLDVWNRVWILDNPFMQNKGKVMEWRDVPYLPKAQDMLCSSLVGRKERAEWAKNIWGAVEKVRKMIGPEKFKDYLSCMDRHDLHWELRLESSII.

Residues 1-30 (MVKKAILKGKGGGPPRRVSKETATKTRQPR) are disordered. At 1 to 98 (MVKKAILKGK…LQKRGKRRSA (98 aa)) the chain is on the cytoplasmic side. A propeptide spans 97 to 117 (SATDWMSWLLVITLLGMTIAA) (ER anchor for the capsid protein C, removed in mature form by serine protease NS3). A helical membrane pass occupies residues 99–119 (TDWMSWLLVITLLGMTIAATV). The Extracellular segment spans residues 120–242 (RKERDGSTVI…HLTRVEGWVW (123 aa)). Residue asparagine 144 is glycosylated (N-linked (GlcNAc...) asparagine; by host). Residues 243–260 (KNRLLALAMVTVVWLTLE) traverse the membrane as a helical segment. Residue serine 261 is a topological domain, cytoplasmic. Residues 262–280 (VVTRVAVLVVLLCLAPVYA) traverse the membrane as a helical segment. The Extracellular segment spans residues 281 to 727 (SRCTHLENRD…HTVLGGAFNS (447 aa)). 6 disulfides stabilise this stretch: cysteine 283–cysteine 310, cysteine 340–cysteine 396, cysteine 340–cysteine 401, cysteine 354–cysteine 385, cysteine 372–cysteine 396, and cysteine 372–cysteine 401. The fusion peptide stretch occupies residues 378–391 (DRGWGNHCGLFGKG). The N-linked (GlcNAc...) asparagine; by host glycan is linked to asparagine 434. Intrachain disulfides connect cysteine 466–cysteine 570 and cysteine 587–cysteine 618. A helical membrane pass occupies residues 728-748 (IFGGVGFLPKLLLGVALAWLG). The Extracellular portion of the chain corresponds to 749–755 (LNMRNPT). A helical transmembrane segment spans residues 756–776 (MSMSFLLAGVLVLAMTLGVGA). At 777–1132 (DVGCAVDTER…RSMVVADNGE (356 aa)) the chain is on the extracellular side. Intrachain disulfides connect cysteine 780–cysteine 791, cysteine 831–cysteine 920, cysteine 955–cysteine 1000, cysteine 1057–cysteine 1106, cysteine 1068–cysteine 1090, and cysteine 1089–cysteine 1093. Residues asparagine 861, asparagine 983, and asparagine 999 are each glycosylated (N-linked (GlcNAc...) asparagine; by host). The chain crosses the membrane as a helical span at residues 1133–1153 (LLSEGGVPGIVALFVVLEYII). Over 1154-1158 (RRRPS) the chain is Cytoplasmic. Residues 1159–1179 (TGSTVVWGGIVVLALLVTGMV) form a helical membrane-spanning segment. At 1180–1187 (RMESLVRY) the chain is on the lumenal side. The chain crosses the membrane as a helical span at residues 1188 to 1208 (VVAVGITFHLELGPEIVALML). Over 1209 to 1293 (LQAVFELRVG…LLMALMTQQD (85 aa)) the chain is Cytoplasmic. The chain crosses the membrane as a helical span at residues 1294 to 1314 (VVTVHHGLVCFLSAASACSIW). Topologically, residues 1315–1327 (RLLRGHREQKGLT) are lumenal. Residues 1328–1348 (WIVPLARLLGGEGSGIRLLAF) form a helical membrane-spanning segment. Topologically, residues 1349 to 1359 (WELSAHRGRRS) are cytoplasmic. A helical transmembrane segment spans residues 1360-1377 (FSEPLTVVGVMLTLASGM). Residues 1378 to 1382 (MRHTS) are Lumenal-facing. The chain crosses the membrane as a helical span at residues 1383–1403 (QEALCALAVASFLLLMLVLGT). Topologically, residues 1404–1454 (RKMQLVAEWSGCVEWHPELVNEGGEVSLRVRQDAMGNFHLTELEKEERMMA) are cytoplasmic. The interval 1410-1449 (AEWSGCVEWHPELVNEGGEVSLRVRQDAMGNFHLTELEKE) is interacts with and activates NS3 protease. An intramembrane region (helical) is located at residues 1455–1475 (FWLIAGLAASAIHWSGIIGVM). The Cytoplasmic segment spans residues 1476 to 2160 (GLWTLTKMLR…RMAERDAPEA (685 aa)). Positions 1490–1669 (SDLVFSGQGG…EAEKSRPNLP (180 aa)) constitute a Peptidase S7 domain. Active-site charge relay system; for serine protease NS3 activity residues include histidine 1543, aspartate 1567, and serine 1627. In terms of domain architecture, Helicase ATP-binding spans 1675–1831 (TGWTSKGQIT…ESNGAITSEE (157 aa)). An ATP-binding site is contributed by 1688-1695 (MHPGSGKT). Residues 1779-1782 (DEAH) carry the DEAH box motif. In terms of domain architecture, Helicase C-terminal spans 1841 to 2000 (DGFDWITEYE…TLRGPVATFY (160 aa)). The residue at position 1883 (lysine 1883) is an N6-acetyllysine; by host. The chain crosses the membrane as a helical span at residues 2161-2181 (FLTMVEMMVLGLATLGVIWCF). Topologically, residues 2182-2189 (VVRTSISR) are lumenal. Positions 2190–2210 (MMLGTLVLLASLLLLWAGGVG) form an intramembrane region, helical. Residue tyrosine 2211 is a topological domain, lumenal. A helical membrane pass occupies residues 2212–2232 (GNMAGVALIFYTLLTVLQPEA). Over 2233 to 2244 (GKQRSSDDNKLA) the chain is Cytoplasmic. Residues 2245–2265 (YFLLTLCSLAGLVAANEMGFL) form a helical membrane-spanning segment. Over 2266–2299 (EKTKADLSTVLWSEREEPRPWSEWTNVDIQPARS) the chain is Lumenal. The segment at residues 2300–2320 (WGTYVLVVSLFTPYIIHQLQT) is an intramembrane region (helical). At 2321–2343 (KIQQLVNSAVASGAQAMRDLGGG) the chain is on the lumenal side. An intramembrane region (helical) is located at residues 2344-2364 (APFFGVAGHVMTLGVVSLIGA). Residues 2365 to 2368 (TPTS) lie on the Lumenal side of the membrane. The chain crosses the membrane as a helical span at residues 2369–2389 (LMVGVGLAALHLAIVVSGLEA). The Cytoplasmic portion of the chain corresponds to 2390–2432 (ELTQRAHKVFFSAMVRNPMVDGDVINPFGEGEAKPALYERRMS). Residues 2433–2453 (LVLAIVLCLMSVVMNRTVASI) traverse the membrane as a helical segment. Residues 2454–2477 (TEASAVGLAAAGQLLRPEADTLWT) lie on the Lumenal side of the membrane. The chain crosses the membrane as a helical span at residues 2478–2498 (MPVACGMSGVVRGSLWGFLPL). Residues 2499–3414 (GHRLWLRASG…WELRLESSII (916 aa)) lie on the Cytoplasmic side of the membrane. The mRNA cap 0-1 NS5-type MT domain maps to 2512-2776 (GGSEGDTLGD…ELDLGVGTRC (265 aa)). Serine 2567 provides a ligand contact to S-adenosyl-L-methionine. A Phosphoserine modification is found at serine 2567. The active-site For 2'-O-MTase activity is the lysine 2572. The S-adenosyl-L-methionine site is built by glycine 2597, tryptophan 2598, threonine 2615, isoleucine 2616, aspartate 2642, and valine 2643. Aspartate 2657 serves as the catalytic For 2'-O-MTase activity. Isoleucine 2658 is an S-adenosyl-L-methionine binding site. Active-site for 2'-O-MTase activity residues include lysine 2694 and glutamate 2730. An interaction with host SCRIB region spans residues 2730–2734 (EMYYS). Tyrosine 2732 serves as a coordination point for S-adenosyl-L-methionine. Zn(2+) is bound by residues glutamate 2950, histidine 2954, cysteine 2959, and cysteine 2962. One can recognise a RdRp catalytic domain in the interval 3040–3189 (GLFYADDTAG…RPLDDRFGKA (150 aa)). Positions 3224, 3240, and 3359 each coordinate Zn(2+).

In the N-terminal section; belongs to the class I-like SAM-binding methyltransferase superfamily. mRNA cap 0-1 NS5-type methyltransferase family. Homodimer. Interacts (via N-terminus) with host EXOC1 (via C-terminus); this interaction results in EXOC1 degradation through the proteasome degradation pathway. As to quaternary structure, forms heterodimers with envelope protein E in the endoplasmic reticulum and Golgi. In terms of assembly, homodimer; in the endoplasmic reticulum and Golgi. Interacts with protein prM. Interacts with non-structural protein 1. Homodimer; Homohexamer when secreted. Interacts with envelope protein E. As to quaternary structure, interacts (via N-terminus) with serine protease NS3. In terms of assembly, forms a heterodimer with serine protease NS3. May form homooligomers. Forms a heterodimer with NS2B. Interacts with NS4B. Interacts with unphosphorylated RNA-directed RNA polymerase NS5; this interaction stimulates RNA-directed RNA polymerase NS5 guanylyltransferase activity. As to quaternary structure, interacts with serine protease NS3. In terms of assembly, homodimer. Interacts with host STAT2; this interaction inhibits the phosphorylation of the latter, and, when all viral proteins are present (polyprotein), targets STAT2 for degradation. Interacts with serine protease NS3. Interacts with host SCRIB; this interaction targets NS5 to the cell membrane periphery and nucleus, thereby allowing efficient host nuclear STAT1 inhibition. In terms of processing, specific enzymatic cleavages in vivo yield mature proteins. Cleavages in the lumen of endoplasmic reticulum are performed by host signal peptidase, whereas cleavages in the cytoplasmic side are performed by serine protease NS3. Signal cleavage at the 2K-4B site requires a prior NS3 protease-mediated cleavage at the 4A-2K site. Cleaved in post-Golgi vesicles by a host furin, releasing the mature small envelope protein M, and peptide pr. This cleavage is incomplete as up to 30% of viral particles still carry uncleaved prM. Post-translationally, N-glycosylated. In terms of processing, N-glycosylated. The excreted form is glycosylated and this is required for efficient secretion of the protein from infected cells. Acetylated by host KAT5. Acetylation modulates NS3 RNA-binding and unwinding activities and plays an important positive role for viral replication. Post-translationally, phosphorylated on serines residues. This phosphorylation may trigger NS5 nuclear localization.

It is found in the virion. Its subcellular location is the host nucleus. It localises to the host cytoplasm. The protein resides in the host perinuclear region. The protein localises to the secreted. It is found in the virion membrane. Its subcellular location is the host endoplasmic reticulum membrane. It catalyses the reaction Selective hydrolysis of -Xaa-Xaa-|-Yaa- bonds in which each of the Xaa can be either Arg or Lys and Yaa can be either Ser or Ala.. It carries out the reaction RNA(n) + a ribonucleoside 5'-triphosphate = RNA(n+1) + diphosphate. The catalysed reaction is a ribonucleoside 5'-triphosphate + H2O = a ribonucleoside 5'-diphosphate + phosphate + H(+). The enzyme catalyses ATP + H2O = ADP + phosphate + H(+). It catalyses the reaction a 5'-end (5'-triphosphoguanosine)-ribonucleoside in mRNA + S-adenosyl-L-methionine = a 5'-end (N(7)-methyl 5'-triphosphoguanosine)-ribonucleoside in mRNA + S-adenosyl-L-homocysteine. It carries out the reaction a 5'-end (N(7)-methyl 5'-triphosphoguanosine)-ribonucleoside in mRNA + S-adenosyl-L-methionine = a 5'-end (N(7)-methyl 5'-triphosphoguanosine)-(2'-O-methyl-ribonucleoside) in mRNA + S-adenosyl-L-homocysteine + H(+). Plays a role in virus budding by binding to the cell membrane and gathering the viral RNA into a nucleocapsid that forms the core of a mature virus particle. During virus entry, may induce genome penetration into the host cytoplasm after hemifusion induced by the surface proteins. Can migrate to the cell nucleus where it modulates host functions. Functionally, inhibits RNA silencing by interfering with host Dicer. Its function is as follows. Prevents premature fusion activity of envelope proteins in trans-Golgi by binding to envelope protein E at pH6.0. After virion release in extracellular space, gets dissociated from E dimers. In terms of biological role, acts as a chaperone for envelope protein E during intracellular virion assembly by masking and inactivating envelope protein E fusion peptide. prM is the only viral peptide matured by host furin in the trans-Golgi network probably to avoid catastrophic activation of the viral fusion activity in acidic Golgi compartment prior to virion release. prM-E cleavage is inefficient, and many virions are only partially matured. These uncleaved prM would play a role in immune evasion. May play a role in virus budding. Exerts cytotoxic effects by activating a mitochondrial apoptotic pathway through M ectodomain. May display a viroporin activity. Functionally, binds to host cell surface receptor and mediates fusion between viral and cellular membranes. Envelope protein is synthesized in the endoplasmic reticulum in the form of heterodimer with protein prM. They play a role in virion budding in the ER, and the newly formed immature particle is covered with 60 spikes composed of heterodimer between precursor prM and envelope protein E. The virion is transported to the Golgi apparatus where the low pH causes dissociation of PrM-E heterodimers and formation of E homodimers. prM-E cleavage is inefficient, and many virions are only partially matured. These uncleaved prM would play a role in immune evasion. Its function is as follows. Involved in immune evasion, pathogenesis and viral replication. Once cleaved off the polyprotein, is targeted to three destinations: the viral replication cycle, the plasma membrane and the extracellular compartment. Essential for viral replication. Required for formation of the replication complex and recruitment of other non-structural proteins to the ER-derived membrane structures. Excreted as a hexameric lipoparticle that plays a role against host immune response. Antagonizing the complement function. Binds to the host macrophages and dendritic cells. Inhibits signal transduction originating from Toll-like receptor 3 (TLR3). In terms of biological role, component of the viral RNA replication complex that functions in virion assembly and antagonizes the host immune response. Required cofactor for the serine protease function of NS3. May have membrane-destabilizing activity and form viroporins. Functionally, displays three enzymatic activities: serine protease, NTPase and RNA helicase. NS3 serine protease, in association with NS2B, performs its autocleavage and cleaves the polyprotein at dibasic sites in the cytoplasm: C-prM, NS2A-NS2B, NS2B-NS3, NS3-NS4A, NS4A-2K and NS4B-NS5. NS3 RNA helicase binds RNA and unwinds dsRNA in the 3' to 5' direction. Its function is as follows. Regulates the ATPase activity of the NS3 helicase activity. NS4A allows NS3 helicase to conserve energy during unwinding. In terms of biological role, functions as a signal peptide for NS4B and is required for the interferon antagonism activity of the latter. Induces the formation of ER-derived membrane vesicles where the viral replication takes place. Inhibits interferon (IFN)-induced host STAT1 phosphorylation and nuclear translocation, thereby preventing the establishment of cellular antiviral state by blocking the IFN-alpha/beta pathway. Inhibits STAT2 translocation in the nucleus after IFN-alpha treatment. Functionally, replicates the viral (+) and (-) genome, and performs the capping of genomes in the cytoplasm. NS5 methylates viral RNA cap at guanine N-7 and ribose 2'-O positions. Besides its role in genome replication, also prevents the establishment of cellular antiviral state by blocking the interferon-alpha/beta (IFN-alpha/beta) signaling pathway. Inhibits host TYK2 and STAT2 phosphorylation, thereby preventing activation of JAK-STAT signaling pathway. The chain is Genome polyprotein from Tick-borne encephalitis virus (strain Hypr) (TBEV).